The sequence spans 180 residues: Probable galaptin lec-8 (180 aa).

The Galectin domain occupies 11 to 138 (SAHAIREQLR…AAHIDEISFS (128 aa)).

This chain is Probable galaptin lec-8 (lec-8), found in Caenorhabditis elegans.